Reading from the N-terminus, the 282-residue chain is 4-diphosphocytidyl-2-C-methyl-D-erythritol kinase (282 aa).

Residue K12 is part of the active site. ATP is bound at residue 95–105 (PMGGGIGGGSS). Residue D137 is part of the active site.

Belongs to the GHMP kinase family. IspE subfamily.

The enzyme catalyses 4-CDP-2-C-methyl-D-erythritol + ATP = 4-CDP-2-C-methyl-D-erythritol 2-phosphate + ADP + H(+). Its pathway is isoprenoid biosynthesis; isopentenyl diphosphate biosynthesis via DXP pathway; isopentenyl diphosphate from 1-deoxy-D-xylulose 5-phosphate: step 3/6. In terms of biological role, catalyzes the phosphorylation of the position 2 hydroxy group of 4-diphosphocytidyl-2C-methyl-D-erythritol. This Pseudomonas aeruginosa (strain ATCC 15692 / DSM 22644 / CIP 104116 / JCM 14847 / LMG 12228 / 1C / PRS 101 / PAO1) protein is 4-diphosphocytidyl-2-C-methyl-D-erythritol kinase.